The chain runs to 705 residues: Kinesin-like protein KIF2A (705 aa).

The tract at residues 1–216 (MATANFGKIQ…LDYRPLTTAD (216 aa)) is globular. The disordered stretch occupies residues 65 to 186 (DLVPDEDIEP…QELREKRAQD (122 aa)). A Phosphoserine modification is found at S75. A Phosphothreonine modification is found at T96. K101 is subject to N6-acetyllysine. Residues 122–139 (LPEQSSSAQQNGSVSDIS) show a composition bias toward polar residues. 2 positions are modified to phosphoserine: S134 and S139. Residues 158–186 (CVKEVEKLQEKREKRRLQQQELREKRAQD) show a composition bias toward basic and acidic residues. A Kinesin motor domain is found at 222-552 (RICVCVRKRP…LRYANRVKEL (331 aa)). 312-319 (GQTGSGKT) is an ATP binding site. Residues T528 and Y545 each carry the phosphoserine modification. A coiled-coil region spans residues 659–698 (ATQLEAILEQKIDILTELRDKVKSFRAALQEEEQASKQIN).

This sequence belongs to the TRAFAC class myosin-kinesin ATPase superfamily. Kinesin family. MCAK/KIF2 subfamily. In terms of assembly, interacts with AURKA and PLK1. Interacts with PSRC1. Interacts with MCRS1; the interaction enhances recruitment of KIF2A to the minus ends of spindle microtubules which promotes chromosome alignment. Highest level in lung. High level in ovary, moderate levels in heart, kidney, placenta, skeletal muscle and spleen (at protein level). Pancreas and spleen express a shorter isoform (at protein level). Expressed in the flagellum of elongated spermatids and sperm in the testis lumen (at protein level). Isoform 1 expressed in neuronal cells. Isoform 2 expressed in astrocytes and fibroblasts.

Its subcellular location is the cytoplasm. The protein resides in the cytoskeleton. It is found in the microtubule organizing center. It localises to the centrosome. The protein localises to the spindle pole. Its subcellular location is the spindle. The protein resides in the lysosome. In terms of biological role, plus end-directed microtubule-dependent motor required for normal brain development. May regulate microtubule dynamics during axonal growth. Required for normal progression through mitosis. Required for normal congress of chromosomes at the metaphase plate. Required for normal spindle dynamics during mitosis. Promotes spindle turnover. Implicated in formation of bipolar mitotic spindles. Has microtubule depolymerization activity. In Mus musculus (Mouse), this protein is Kinesin-like protein KIF2A (Kif2a).